Reading from the N-terminus, the 130-residue chain is Holo-[acyl-carrier-protein] synthase (130 aa).

Asp9 and Glu58 together coordinate Mg(2+).

It belongs to the P-Pant transferase superfamily. AcpS family. Requires Mg(2+) as cofactor.

Its subcellular location is the cytoplasm. It catalyses the reaction apo-[ACP] + CoA = holo-[ACP] + adenosine 3',5'-bisphosphate + H(+). In terms of biological role, transfers the 4'-phosphopantetheine moiety from coenzyme A to a Ser of acyl-carrier-protein. This is Holo-[acyl-carrier-protein] synthase from Mycolicibacterium smegmatis (strain ATCC 700084 / mc(2)155) (Mycobacterium smegmatis).